The sequence spans 122 residues: Large ribosomal subunit protein uL14 (122 aa).

This sequence belongs to the universal ribosomal protein uL14 family. Part of the 50S ribosomal subunit. Forms a cluster with proteins L3 and L19. In the 70S ribosome, L14 and L19 interact and together make contacts with the 16S rRNA in bridges B5 and B8.

Functionally, binds to 23S rRNA. Forms part of two intersubunit bridges in the 70S ribosome. The sequence is that of Large ribosomal subunit protein uL14 from Chlorobium phaeobacteroides (strain BS1).